A 224-amino-acid chain; its full sequence is Uridylate kinase (224 aa).

Position 8-12 (8-12) interacts with ATP; it reads KITGK. Gly43 is a binding site for UMP. ATP is bound by residues Gly44 and Arg48. Residues Asp66 and 114 to 120 contribute to the UMP site; that span reads LIPGQST. 3 residues coordinate ATP: Ser140, Tyr146, and Asp149.

Belongs to the UMP kinase family. Homohexamer.

It localises to the cytoplasm. The catalysed reaction is UMP + ATP = UDP + ADP. It participates in pyrimidine metabolism; CTP biosynthesis via de novo pathway; UDP from UMP (UMPK route): step 1/1. Its activity is regulated as follows. Inhibited by UTP. In terms of biological role, catalyzes the reversible phosphorylation of UMP to UDP. This chain is Uridylate kinase, found in Staphylothermus marinus (strain ATCC 43588 / DSM 3639 / JCM 9404 / F1).